A 706-amino-acid chain; its full sequence is B-cell lymphoma 6 protein (706 aa).

In terms of domain architecture, BTB spans 32-99 (TDVVIVVSRE…MYTSRLNLRE (68 aa)). A disordered region spans residues 317 to 349 (EPPNAPLNRKGLVSPQSPQKSDCQPNSPTESCS). The segment covering 330–349 (SPQSPQKSDCQPNSPTESCS) has biased composition (polar residues). A phosphoserine; by MAPK1 mark is found at S333 and S343. S361 is subject to Phosphoserine. Positions 376–379 (KKYK) are required for interaction with NuRD complex and for transcriptional repressor activity. K379 is subject to N6-acetyllysine. At S404 the chain carries Phosphoserine. A disordered region spans residues 407–467 (AYTAPPACQP…PRSSSESHSP (61 aa)). The span at 424–456 (DLQSPTKLSASGEDSTIPQASRLNNIVNRSMTG) shows a compositional bias: polar residues. Low complexity predominate over residues 457–466 (SPRSSSESHS). 6 consecutive C2H2-type zinc fingers follow at residues 518 to 541 (FFCNECDCRFSEEASLKRHTLQTH), 546 to 568 (YKCDRCQASFRYKGNLASHKTVH), 574 to 596 (YRCNICGAQFNRPANLKTHTRIH), 602 to 624 (YKCETCGARFVQVAHLRAHVLIH), 630 to 652 (YPCEICGTRFRHLQTLKSHLRIH), and 658 to 681 (YHCEKCNLHFRHKSQLRLHLRQKH).

Homodimer. Interacts (via BTB domain) with the corepressors BCOR, NCOR1 and SMRT/NCOR2; the interactions are direct. Forms preferably ternary complexes with BCOR and SMRT/NCOR2 on target gene promoters but, on enhancer elements, interacts with SMRT/NCOR2 and HDAC3 to repress proximal gene expression. Interacts with histone deacetylases HDAC2, HDAC5 and HDAC9 (via the catalytic domain). Interacts with ZBTB7 and BCL6B. Interacts with SCF(FBXO11) complex; the interaction is independent of phosphorylation and promotes ubiquitination. Interacts (when phosphorylated) with PIN1; the interaction is required for BCL6 degradation upon genotoxic stress. Interacts with ZBTB17; inhibits ZBTB17 transcriptional activity. Interacts with CTBP1, autoinhibits its transcriptional expression. Interacts with NOTCH1 NCID and SIRT1; leads to a epigenetic repression of selective NOTCH1-target genes. Interacts (nor via BTB domain neither acetylated) with the NuRD complex components CHD4, HDAC1, MBD3 and MTA3; the interaction with MTA3 inhibits BCL6 acetylation and is required for BCL6 transpriptional repression. In terms of processing, phosphorylated by MAPK1 in response to antigen receptor activation at Ser-333 and Ser-343. Phosphorylated by ATM in response to genotoxic stress. Phosphorylation induces its degradation by ubiquitin/proteasome pathway. Post-translationally, polyubiquitinated. Polyubiquitinated by SCF(FBXO11), leading to its degradation by the proteasome. Ubiquitinated by the SCF(FBXL17) complex, leading to its degradation by the proteasome: ubiquitination by the SCF(FBXL17) complex takes place when aberrant BTB domain dimers are formed. Acetylated at Lys-379 by EP300 which inhibits the interaction with NuRD complex and the transcriptional repressor function. Deacetylated by HDAC- and SIR2-dependent pathways. As to expression, expressed in germinal center T- and B-cells and in primary immature dendritic cells.

The protein localises to the nucleus. Transcriptional repressor mainly required for germinal center (GC) formation and antibody affinity maturation which has different mechanisms of action specific to the lineage and biological functions. Forms complexes with different corepressors and histone deacetylases to repress the transcriptional expression of different subsets of target genes. Represses its target genes by binding directly to the DNA sequence 5'-TTCCTAGAA-3' (BCL6-binding site) or indirectly by repressing the transcriptional activity of transcription factors. In GC B-cells, represses genes that function in differentiation, inflammation, apoptosis and cell cycle control, also autoregulates its transcriptional expression and up-regulates, indirectly, the expression of some genes important for GC reactions, such as AICDA, through the repression of microRNAs expression, like miR155. An important function is to allow GC B-cells to proliferate very rapidly in response to T-cell dependent antigens and tolerate the physiological DNA breaks required for immunglobulin class switch recombination and somatic hypermutation without inducing a p53/TP53-dependent apoptotic response. In follicular helper CD4(+) T-cells (T(FH) cells), promotes the expression of T(FH)-related genes but inhibits the differentiation of T(H)1, T(H)2 and T(H)17 cells. Also required for the establishment and maintenance of immunological memory for both T- and B-cells. Suppresses macrophage proliferation through competition with STAT5 for STAT-binding motifs binding on certain target genes, such as CCL2 and CCND2. In response to genotoxic stress, controls cell cycle arrest in GC B-cells in both p53/TP53-dependedent and -independent manners. Besides, also controls neurogenesis through the alteration of the composition of NOTCH-dependent transcriptional complexes at selective NOTCH targets, such as HES5, including the recruitment of the deacetylase SIRT1 and resulting in an epigenetic silencing leading to neuronal differentiation. This chain is B-cell lymphoma 6 protein (BCL6), found in Homo sapiens (Human).